A 288-amino-acid polypeptide reads, in one-letter code: Energy-coupling factor transporter ATP-binding protein EcfA2 (288 aa).

The ABC transporter domain maps to 3-246 (IKLEQLGYCY…PDELVDLGLS (244 aa)). 40-47 (GHTGSGKS) is an ATP binding site.

The protein belongs to the ABC transporter superfamily. Energy-coupling factor EcfA family. In terms of assembly, forms a stable energy-coupling factor (ECF) transporter complex composed of 2 membrane-embedded substrate-binding proteins (S component), 2 ATP-binding proteins (A component) and 2 transmembrane proteins (T component).

Its subcellular location is the cell membrane. In terms of biological role, ATP-binding (A) component of a common energy-coupling factor (ECF) ABC-transporter complex. Unlike classic ABC transporters this ECF transporter provides the energy necessary to transport a number of different substrates. The sequence is that of Energy-coupling factor transporter ATP-binding protein EcfA2 from Listeria monocytogenes serotype 4b (strain F2365).